The sequence spans 241 residues: Ubiquinone biosynthesis O-methyltransferase (241 aa).

Positions 46, 66, 87, and 131 each coordinate S-adenosyl-L-methionine.

Belongs to the methyltransferase superfamily. UbiG/COQ3 family.

It carries out the reaction a 3-demethylubiquinol + S-adenosyl-L-methionine = a ubiquinol + S-adenosyl-L-homocysteine + H(+). The catalysed reaction is a 3-(all-trans-polyprenyl)benzene-1,2-diol + S-adenosyl-L-methionine = a 2-methoxy-6-(all-trans-polyprenyl)phenol + S-adenosyl-L-homocysteine + H(+). Its pathway is cofactor biosynthesis; ubiquinone biosynthesis. O-methyltransferase that catalyzes the 2 O-methylation steps in the ubiquinone biosynthetic pathway. This Bordetella parapertussis (strain 12822 / ATCC BAA-587 / NCTC 13253) protein is Ubiquinone biosynthesis O-methyltransferase.